We begin with the raw amino-acid sequence, 286 residues long: Apoptosis inhibitor 1 (286 aa).

2 BIR repeats span residues 29–96 and 131–199; these read LIER…CAYA and LQSR…CYFV. Zn(2+) is bound by residues Cys-169, Cys-172, His-189, and Cys-196. The segment at 238 to 274 adopts an RING-type zinc-finger fold; the sequence is CKVCLERQRDAVLMPCRHFCVCVQCYFGLDQKCPTCR.

Its function is as follows. Acts by blocking cellular apoptosis early in infection. Later, stimulates caspase-3-like protease activity and induces apoptosis, probably to favor the release of occluded virions. In Lepidoptera (butterflies and moths), this protein is Apoptosis inhibitor 1 (IAP1).